A 354-amino-acid polypeptide reads, in one-letter code: Chorismate synthase (354 aa).

Arg48 and Arg54 together coordinate NADP(+). Residues 125 to 127 (RSS), 238 to 239 (NA), Gly278, 293 to 297 (KPTSS), and Arg319 contribute to the FMN site.

It belongs to the chorismate synthase family. Homotetramer. FMNH2 is required as a cofactor.

It catalyses the reaction 5-O-(1-carboxyvinyl)-3-phosphoshikimate = chorismate + phosphate. The protein operates within metabolic intermediate biosynthesis; chorismate biosynthesis; chorismate from D-erythrose 4-phosphate and phosphoenolpyruvate: step 7/7. In terms of biological role, catalyzes the anti-1,4-elimination of the C-3 phosphate and the C-6 proR hydrogen from 5-enolpyruvylshikimate-3-phosphate (EPSP) to yield chorismate, which is the branch point compound that serves as the starting substrate for the three terminal pathways of aromatic amino acid biosynthesis. This reaction introduces a second double bond into the aromatic ring system. The polypeptide is Chorismate synthase (Blochmanniella pennsylvanica (strain BPEN)).